We begin with the raw amino-acid sequence, 174 residues long: Methylated-DNA--protein-cysteine methyltransferase (174 aa).

The active-site Nucleophile; methyl group acceptor is the Cys-144.

Belongs to the MGMT family.

The protein resides in the cytoplasm. The enzyme catalyses a 6-O-methyl-2'-deoxyguanosine in DNA + L-cysteinyl-[protein] = S-methyl-L-cysteinyl-[protein] + a 2'-deoxyguanosine in DNA. It carries out the reaction a 4-O-methyl-thymidine in DNA + L-cysteinyl-[protein] = a thymidine in DNA + S-methyl-L-cysteinyl-[protein]. In terms of biological role, involved in the cellular defense against the biological effects of O6-methylguanine (O6-MeG) and O4-methylthymine (O4-MeT) in DNA. Repairs the methylated nucleobase in DNA by stoichiometrically transferring the methyl group to a cysteine residue in the enzyme. This is a suicide reaction: the enzyme is irreversibly inactivated. The chain is Methylated-DNA--protein-cysteine methyltransferase from Pyrococcus furiosus (strain ATCC 43587 / DSM 3638 / JCM 8422 / Vc1).